Reading from the N-terminus, the 618-residue chain is MRTLWRFIAGFFKWTWRVLNFVREMVLNLFFIFLVLVGVGIWMQIGNGSNSEQTARGALLLDISGVIVDKPSTNHRLGALGRQLFGASSDRLQENSLFDIVNAIRQAKDDRNITGIVLDLKNFTGADQPSMRYIGKALREFRDSGKPVFAVGENYSQGQYYLASFANKIWLSPQGQVDLHGFATNGLYYKTLLDKLKVSTHVFRVGTYKSAVEPFIRDDMSPAAREADSRWIGELWQNYLHTVSANRQISPQQLFPGAQAIIDGLTSVGGDTAKYALDHKLVDALASSADVEKALTKQFGWSKTENNYRAISYYDYSLKTPADTGGTIAVIFANGAIMDGEETPGNVGGDTTASQIRDARLDPKVKAIVLRVNSPGGSVNASEVIRAELAAARAAGKPVVVSMGGMAASGGYWISTPANYIVASPSTLTGSIGIFGVINTVENSLSSIGVHSDGVSTSPLADISMTKALSPEVQQMMQLSIEYGYKRFITLVADARKRTPEQIDKIAQGHVWTGEDAKANGLVDSLGDFDDAVAKAAELAKLKQWHLDYYQDEPTVLDMVMDSMTGSVRAMLPEAIQAMLPAPLVSAANTVKAEGDKLAAFNDPQNRYAFCLTCANVR.

Topologically, residues 1–24 (MRTLWRFIAGFFKWTWRVLNFVRE) are cytoplasmic. The chain crosses the membrane as a helical span at residues 25–45 (MVLNLFFIFLVLVGVGIWMQI). Residues 46-618 (GNGSNSEQTA…AFCLTCANVR (573 aa)) lie on the Periplasmic side of the membrane. Lysine 209 functions as the Proton donor/acceptor in the catalytic mechanism. Serine 409 serves as the catalytic Nucleophile.

This sequence belongs to the peptidase S49 family. Homotetramer.

The protein resides in the cell inner membrane. In terms of biological role, digests cleaved signal peptides in vitro, its in vivo function is unknown. This activity is necessary to maintain proper secretion of mature proteins across the membrane. This chain is Protease 4 (sppA), found in Salmonella typhi.